The sequence spans 325 residues: uncharacterized protein (325 aa).

Residues 1 to 75 form a disordered region; the sequence is MSQPPEHPGN…PPPGYPTHLQ (75 aa). The segment covering 24 to 70 has biased composition (pro residues); that stretch reads YPPPGYGAPPPPPGYGPPPGTYLPPGYNAPPPPPGYGPPPGPPPPGY. 4 consecutive transmembrane segments (helical) span residues 96 to 116, 153 to 173, 205 to 225, and 273 to 293; these read AVTL…VIGA, IVMF…HAGI, LLIV…GLIF, and LVGE…AALI.

Its subcellular location is the cell membrane. This is an uncharacterized protein from Mycobacterium tuberculosis (strain ATCC 25618 / H37Rv).